The primary structure comprises 351 residues: MDLSVFQFDLPEDLIALRPAQPQDAARLLVVHGDGRLIDATVRDLPKYLNTGDVLVFNDTRVLPAALKGVRPARDGASRDVEVDVNLVERQGDCLWLALARPGRRLKDGDEIFFAEGFSARIASRREGGEILLDFNCEGEAMIAALDAHGAMPLPPYIARRRPADAEDRETYQTRFAGEDAASVAAPTAGLHFTPRLLAEVEAAGLKRETVRLHVGLGTFKPLEDRHLSENRLHEEWRRITPEVADRLNAARAAGARLVPVGTTAMRTLESCAGEDGQIHAATGPTDIFLKPGDPVRATDALMTNFHLPGSSLFMLVSALMGTSLMRAAYAHAIEEKYRFYSYGDACLLLP.

It belongs to the QueA family. As to quaternary structure, monomer.

It localises to the cytoplasm. It catalyses the reaction 7-aminomethyl-7-carbaguanosine(34) in tRNA + S-adenosyl-L-methionine = epoxyqueuosine(34) in tRNA + adenine + L-methionine + 2 H(+). It participates in tRNA modification; tRNA-queuosine biosynthesis. Its function is as follows. Transfers and isomerizes the ribose moiety from AdoMet to the 7-aminomethyl group of 7-deazaguanine (preQ1-tRNA) to give epoxyqueuosine (oQ-tRNA). The chain is S-adenosylmethionine:tRNA ribosyltransferase-isomerase from Hyphomonas neptunium (strain ATCC 15444).